Consider the following 425-residue polypeptide: UDP-N-acetylglucosamine 1-carboxyvinyltransferase (425 aa).

22 to 23 is a phosphoenolpyruvate binding site; that stretch reads KN. R98 lines the UDP-N-acetyl-alpha-D-glucosamine pocket. The Proton donor role is filled by C122. At C122 the chain carries 2-(S-cysteinyl)pyruvic acid O-phosphothioketal. UDP-N-acetyl-alpha-D-glucosamine is bound by residues 127–131, D313, and I335; that span reads RPVDQ.

This sequence belongs to the EPSP synthase family. MurA subfamily.

The protein localises to the cytoplasm. It carries out the reaction phosphoenolpyruvate + UDP-N-acetyl-alpha-D-glucosamine = UDP-N-acetyl-3-O-(1-carboxyvinyl)-alpha-D-glucosamine + phosphate. It functions in the pathway cell wall biogenesis; peptidoglycan biosynthesis. Its function is as follows. Cell wall formation. Adds enolpyruvyl to UDP-N-acetylglucosamine. This is UDP-N-acetylglucosamine 1-carboxyvinyltransferase from Xylella fastidiosa (strain M12).